The following is a 189-amino-acid chain: Interferon alpha-F (189 aa).

An N-terminal signal peptide occupies residues 1–23 (MAPAWSLLLALLLLSCNAICSLG). Intrachain disulfides connect Cys24-Cys122 and Cys52-Cys162.

The protein belongs to the alpha/beta interferon family.

The protein resides in the secreted. Produced by macrophages, IFN-alpha have antiviral activities. Interferon stimulates the production of two enzymes: a protein kinase and an oligoadenylate synthetase. The sequence is that of Interferon alpha-F (IFNAF) from Bos taurus (Bovine).